A 216-amino-acid polypeptide reads, in one-letter code: Cytidylate kinase (216 aa).

7–15 provides a ligand contact to ATP; the sequence is GPAASGKGT.

It belongs to the cytidylate kinase family. Type 1 subfamily.

Its subcellular location is the cytoplasm. It catalyses the reaction CMP + ATP = CDP + ADP. The enzyme catalyses dCMP + ATP = dCDP + ADP. In Methylocella silvestris (strain DSM 15510 / CIP 108128 / LMG 27833 / NCIMB 13906 / BL2), this protein is Cytidylate kinase.